Consider the following 147-residue polypeptide: Small ribosomal subunit protein uS12 (147 aa).

It belongs to the universal ribosomal protein uS12 family. In terms of assembly, part of the 30S ribosomal subunit.

Its function is as follows. With S4 and S5 plays an important role in translational accuracy. Located at the interface of the 30S and 50S subunits. This is Small ribosomal subunit protein uS12 from Ignicoccus hospitalis (strain KIN4/I / DSM 18386 / JCM 14125).